The following is a 612-amino-acid chain: Baeyer-Villiger monooxygenase 4 (612 aa).

Residues Glu-99, 107–110 (TWYW), Asp-119, Tyr-125, and Ala-169 contribute to the FAD site. An NADP(+)-binding site is contributed by 117–119 (QCD). NADP(+) contacts are provided by residues 253 to 259 (TGATGVQ), 276 to 277 (RT), and 393 to 394 (KR).

It belongs to the FAD-binding monooxygenase family. It depends on FAD as a cofactor.

Its function is as follows. Catalyzes a Baeyer-Villiger oxidation reaction, i.e. the insertion of an oxygen atom into a carbon-carbon bond adjacent to a carbonyl, which converts ketones to esters or lactones using NADPH as an electron donor. Has a broad substrate scope and oxidizes different compounds including substituted and unsubstituted alicyclic, bicyclic-, aliphatic-ketones, ketones with an aromatic moiety, and sulfides. The highest activities are measured for 2- and 3-methylcyclohexanone, phenylacetone, bicyclo[3.2.0]hept-2-en-6-one and menthone. Cannot use NADH instead of NADPH. Is not active on benzaldehyde. This is Baeyer-Villiger monooxygenase 4 from Dietzia sp. (strain D5).